Consider the following 346-residue polypeptide: GTPase Obg (346 aa).

The Obg domain occupies 1-158 (MFIDKAKIYV…RWIELELKLL (158 aa)). The OBG-type G domain occupies 159 to 330 (ADVGIIGFPN…LINLIRETRD (172 aa)). GTP contacts are provided by residues 165 to 172 (GFPNAGKS), 190 to 194 (FTTLT), 212 to 215 (DIPG), 282 to 285 (NKID), and 311 to 313 (SLI). S172 and T192 together coordinate Mg(2+).

Belongs to the TRAFAC class OBG-HflX-like GTPase superfamily. OBG GTPase family. In terms of assembly, monomer. Requires Mg(2+) as cofactor.

It localises to the cytoplasm. Functionally, an essential GTPase which binds GTP, GDP and possibly (p)ppGpp with moderate affinity, with high nucleotide exchange rates and a fairly low GTP hydrolysis rate. Plays a role in control of the cell cycle, stress response, ribosome biogenesis and in those bacteria that undergo differentiation, in morphogenesis control. In Sulfurihydrogenibium sp. (strain YO3AOP1), this protein is GTPase Obg.